A 562-amino-acid chain; its full sequence is Arginine--tRNA ligase (562 aa).

The short motif at 129-139 (ANPTGPLHVGH) is the 'HIGH' region element.

This sequence belongs to the class-I aminoacyl-tRNA synthetase family. Monomer.

The protein localises to the cytoplasm. The catalysed reaction is tRNA(Arg) + L-arginine + ATP = L-arginyl-tRNA(Arg) + AMP + diphosphate. This chain is Arginine--tRNA ligase, found in Xanthomonas campestris pv. campestris (strain B100).